Here is a 780-residue protein sequence, read N- to C-terminus: Ino eighty subunit 1 (780 aa).

Disordered regions lie at residues 1 to 25 (MADV…QQIH) and 563 to 780 (ANGP…PGWN). The segment covering 563 to 584 (ANGPRRDRKKEREERQKAREEA) has biased composition (basic and acidic residues). Over residues 600–613 (SRARAQRNAKRKLA) the composition is skewed to basic residues. Low complexity predominate over residues 614-635 (RAAAAASSTPSASTPKTAAARS). 2 stretches are compositionally biased toward acidic residues: residues 676–686 (LEGEESLDDID) and 723–751 (DADD…EGDD).

Component of the chromatin-remodeling INO80 complex.

The protein localises to the nucleus. Probably involved in transcription regulation via its interaction with the INO80 complex, a chromatin-remodeling complex. In Emericella nidulans (strain FGSC A4 / ATCC 38163 / CBS 112.46 / NRRL 194 / M139) (Aspergillus nidulans), this protein is Ino eighty subunit 1.